A 143-amino-acid polypeptide reads, in one-letter code: Cofilin (143 aa).

Residues 5–137 enclose the ADF-H domain; sequence GVAVADESLN…AYESVLEKVS (133 aa).

It belongs to the actin-binding proteins ADF family.

It localises to the cytoplasm. The protein localises to the cytoskeleton. It is found in the nucleus matrix. In terms of biological role, controls reversibly actin polymerization and depolymerization in a pH-sensitive manner. It has the ability to bind G- and F-actin in a 1:1 ratio of cofilin to actin. Binding to F-actin is regulated by tropomyosin. It is the major component of intranuclear and cytoplasmic actin rods. Required for accumulation of actin at the cell division site via depolymerizing actin at the cell ends. In association with myosin II has a role in the assembly of the contractile ring via severing actin filaments. Involved in the maintenance of the contractile ring once formed. In association with profilin and capping protein, has a role in the mitotic reorganization of the actin cytoskeleton. In Kluyveromyces lactis (strain ATCC 8585 / CBS 2359 / DSM 70799 / NBRC 1267 / NRRL Y-1140 / WM37) (Yeast), this protein is Cofilin (COF1).